Here is a 174-residue protein sequence, read N- to C-terminus: MAAVVLGGDTMGPERIFPNQTEDLGPHQGPTEGTGDWSSEEPEEEQEETGAGPAGYSYQPLNQDPEQEEVELAPVGEGEDGAADIQDRIQALGLHLPDPPLESEDEDEEGAAALSSHSSIPMDPEHVELVKRTMAGVSLPAPGVPAWAREISDAQWEDVVQKALQARQASPAWK.

2 disordered regions span residues 1-83 and 95-123; these read MAAV…DGAA and HLPDPPLESEDEDEEGAAALSSHSSIPMD. Acidic residues-rich tracts occupy residues 38-48, 65-82, and 101-110; these read SSEEPEEEQEE, PEQEEVELAPVGEGEDGA, and LESEDEDEEG. Residue serine 103 is modified to Phosphoserine.

As to expression, highly expressed in testis. Transcripts can be found in primary and secondary spermatocytes, and spermatids, but the protein itself is only detected in spermatids. No expression in Leydig cells, spermatogonia, or sperm. Very weak expression in the heart, kidney, spleen, thymus and ovary.

In terms of biological role, may play an important role in spermatogenesis and/or testis development. This is Male-enhanced antigen 1 (Mea1) from Mus musculus (Mouse).